A 449-amino-acid polypeptide reads, in one-letter code: Packaging protein 1 (449 aa).

Residues 1–78 (METRGRRPAA…PAKRGDMLDR (78 aa)) are disordered. 171–178 (GPTGCGKS) is a binding site for ATP. A DNA-binding region spans residues 440-449 (RAYRARKTPK).

Belongs to the adenoviridae packaging protein 1 family. In terms of assembly, homodimer. Part of a genome packaging complex composed of packaging proteins 1, 2 and 3; this complex specifically binds to the packaging sequence on the left end of viral genomic DNA and performs packaging of the viral genome. Interacts with protein 33K.

Its subcellular location is the virion. The protein resides in the host nucleus. It is found in the host nucleoplasm. It localises to the host nucleolus. In terms of biological role, component of the packaging machinery which encapsidates the viral DNA into preformed capsids and transcriptional activator of the viral major late promoter (MLP). Binds, along with packaging proteins 2 and 3, to the specific packaging sequence on the left end of viral genomic DNA and displays ATPase activity thereby providing the power stroke of the packaging machinery. The activity of packaging protein IVa2 is stimulated by protein 33K which acts as a terminase. May be the protein that pumps DNA into the capsid powered by ATP hydrolysis. Specifically binds to the 5'-CG-3' nucleotides of the repeats making up the packaging sequence. Component of the DEF-A and DEF-B transcription factors that bind downstream elements of the major late promoter (MLP), and stimulate transcription from the MLP after initiation of viral DNA replication. DEF-A is a heterodimer packaging proteins 1 and 2 and DEF-B is a homodimer of packaging protein 1. The sequence is that of Packaging protein 1 from Human adenovirus C serotype 5 (HAdV-5).